We begin with the raw amino-acid sequence, 198 residues long: Transcription factor FapR (198 aa).

One can recognise a MaoC-like domain in the interval Asn102–Val169.

The protein belongs to the FapR family.

Transcriptional factor involved in regulation of membrane lipid biosynthesis by repressing genes involved in fatty acid and phospholipid metabolism. The sequence is that of Transcription factor FapR from Geobacillus sp. (strain WCH70).